The chain runs to 240 residues: RNA transcription, translation and transport factor protein (240 aa).

It belongs to the RTRAF family. In terms of assembly, homodimer. Component of a tRNA-splicing ligase complex.

It is found in the nucleus. The protein resides in the cytoplasm. The protein localises to the cytosol. It localises to the perinuclear region. Its subcellular location is the cytoskeleton. It is found in the microtubule organizing center. The protein resides in the centrosome. RNA-binding protein involved in modulation of mRNA transcription by Polymerase II. Component of the tRNA-splicing ligase complex. This is RNA transcription, translation and transport factor protein from Xenopus laevis (African clawed frog).